Reading from the N-terminus, the 721-residue chain is Phosphomethylpyrimidine synthase (721 aa).

Residues Asn-256, Met-285, Tyr-314, His-350, 370–372 (SRG), 411–414 (DGMR), and Glu-450 contribute to the substrate site. Residue His-454 coordinates Zn(2+). Tyr-477 lines the substrate pocket. Residue His-518 participates in Zn(2+) binding. [4Fe-4S] cluster-binding residues include Cys-598, Cys-601, and Cys-606.

The protein belongs to the ThiC family. Homodimer. It depends on [4Fe-4S] cluster as a cofactor.

It catalyses the reaction 5-amino-1-(5-phospho-beta-D-ribosyl)imidazole + S-adenosyl-L-methionine = 4-amino-2-methyl-5-(phosphooxymethyl)pyrimidine + CO + 5'-deoxyadenosine + formate + L-methionine + 3 H(+). It participates in cofactor biosynthesis; thiamine diphosphate biosynthesis. Functionally, catalyzes the synthesis of the hydroxymethylpyrimidine phosphate (HMP-P) moiety of thiamine from aminoimidazole ribotide (AIR) in a radical S-adenosyl-L-methionine (SAM)-dependent reaction. The polypeptide is Phosphomethylpyrimidine synthase (Shewanella oneidensis (strain ATCC 700550 / JCM 31522 / CIP 106686 / LMG 19005 / NCIMB 14063 / MR-1)).